The sequence spans 1200 residues: Ice nucleation protein (1200 aa).

An octapeptide periodicity region spans residues 176-1151 (ATYGSTLSGD…LSAGEDSILI (976 aa)).

Belongs to the bacterial ice nucleation protein family.

It is found in the cell outer membrane. Its function is as follows. Ice nucleation proteins enable bacteria to nucleate crystallization in supercooled water. This is Ice nucleation protein (inaZ) from Pseudomonas syringae pv. syringae.